A 169-amino-acid polypeptide reads, in one-letter code: Large ribosomal subunit protein uL5 (169 aa).

This sequence belongs to the universal ribosomal protein uL5 family. As to quaternary structure, part of the 50S ribosomal subunit; contacts the 5S rRNA and probably tRNA. Forms a bridge to the 30S subunit in the 70S ribosome.

Its function is as follows. This is one of the proteins that bind and probably mediate the attachment of the 5S RNA into the large ribosomal subunit, where it forms part of the central protuberance. In the 70S ribosome it contacts protein S13 of the 30S subunit (bridge B1b), connecting the 2 subunits; this bridge is implicated in subunit movement. May contact the P site tRNA; the 5S rRNA and some of its associated proteins might help stabilize positioning of ribosome-bound tRNAs. This chain is Large ribosomal subunit protein uL5, found in Methanosarcina barkeri (strain Fusaro / DSM 804).